The chain runs to 724 residues: WW domain-containing protein ZK1098.1 (724 aa).

2 consecutive WW domains span residues 78-111 (PSVE…KPDV) and 123-156 (QPQQ…KPDG). FF domains are found at residues 224–282 (KKRQ…WKVQ), 295–349 (IKKS…CIDF), 353–422 (RDKE…HIKQ), 442–502 (QRKV…FVED), 507–562 (YTED…LIEK), and 578–632 (KRRL…YKNG). The disordered stretch occupies residues 626–724 (FNHYKNGTSG…KRKRRESEAD (99 aa)). Polar residues predominate over residues 630-639 (KNGTSGTTAG). The span at 645-657 (KKKKKKDKKKKNK) shows a compositional bias: basic residues. Residues 681–692 (SKEDRMDDEERG) are compositionally biased toward basic and acidic residues. The span at 693-703 (KKSKKSRKRSP) shows a compositional bias: basic residues.

The sequence is that of WW domain-containing protein ZK1098.1 from Caenorhabditis elegans.